The chain runs to 349 residues: Dehydrogenase FPY6 (349 aa).

The protein belongs to the Gfo/Idh/MocA family.

The protein operates within secondary metabolite biosynthesis. Its function is as follows. Dehydrogenase; part of the gene cluster that mediates the biosynthesis of the gamma-pyrones fusapyrone (FPY) and deoxyfusapyrone (dFPY). FPY is an undecaketide and thus likely synthesized by the polyketide synthase FPY1 from acetyl-CoA functioning as starter unit and the addition of 10 malonyl-CoA extender units by successive Claisen-condensations. Next to this, FPY shares some rare features: C-glycosylated 4-deoxyglucose at C-3, a gem-dimethyl group at C-13, and an alpha-beta to beta-gamma double bond shift at C-20. During FPY biosynthesis mono-C-methyl groups are transferred to the tetra-, penta-, hexa- and heptaketide, while two C-methyl groups are transferred to the nonaketide, suggesting that the CMet domain is programmed to selectively catalyze two successive C-alpha-methylation reactions of the nonaketide, while other alpha-carbons are non- or mono-methylated only. While the origin of the 4'-deoxyglucose moiety remains opaque, its transfer to C-3 is most likely mediated by the C-glycosyltransferase FPY2. Next to this, the hydroxyl group present at C-33 and discriminating between FPY and dFPY, is likely to be installed by the cytochrome P450 monooxygenase FPY7. No putative function can be predicted for the remaining genes FPY3-FPY6. The sequence is that of Dehydrogenase FPY6 from Fusarium mangiferae (Mango malformation disease fungus).